The sequence spans 63 residues: Large ribosomal subunit protein uL30 (63 aa).

Belongs to the universal ribosomal protein uL30 family. As to quaternary structure, part of the 50S ribosomal subunit.

The protein is Large ribosomal subunit protein uL30 of Rickettsia felis (strain ATCC VR-1525 / URRWXCal2) (Rickettsia azadi).